The primary structure comprises 479 residues: Aspartyl/glutamyl-tRNA(Asn/Gln) amidotransferase subunit B (479 aa).

This sequence belongs to the GatB/GatE family. GatB subfamily. As to quaternary structure, heterotrimer of A, B and C subunits.

The enzyme catalyses L-glutamyl-tRNA(Gln) + L-glutamine + ATP + H2O = L-glutaminyl-tRNA(Gln) + L-glutamate + ADP + phosphate + H(+). The catalysed reaction is L-aspartyl-tRNA(Asn) + L-glutamine + ATP + H2O = L-asparaginyl-tRNA(Asn) + L-glutamate + ADP + phosphate + 2 H(+). Its function is as follows. Allows the formation of correctly charged Asn-tRNA(Asn) or Gln-tRNA(Gln) through the transamidation of misacylated Asp-tRNA(Asn) or Glu-tRNA(Gln) in organisms which lack either or both of asparaginyl-tRNA or glutaminyl-tRNA synthetases. The reaction takes place in the presence of glutamine and ATP through an activated phospho-Asp-tRNA(Asn) or phospho-Glu-tRNA(Gln). This chain is Aspartyl/glutamyl-tRNA(Asn/Gln) amidotransferase subunit B, found in Myxococcus xanthus (strain DK1622).